The chain runs to 235 residues: N-alpha-acetyltransferase 10 (235 aa).

Met-1 carries the N-acetylmethionine modification. An interaction with NAA15 region spans residues 1 to 58 (MNIRNARPEDLMNMQHCNLLCLPENYQMKYYFYHGLSWPQLSYIAEDENGKIVGYVLA). An N-acetyltransferase domain is found at 1–152 (MNIRNARPED…DAYAMKRDLT (152 aa)). Lys-136 bears the N6-acetyllysine; by autocatalysis mark. Residues 178–235 (NKVESKGNSPPSSGEACREEKGLAAEDSGGDSKDLSEVSETTESTDVKDSSEASDSAS) form a disordered region. Residues Ser-182, Ser-186, and Ser-205 each carry the phosphoserine modification. Over residues 193 to 213 (ACREEKGLAAEDSGGDSKDLS) the composition is skewed to basic and acidic residues. Ser-209 bears the Phosphoserine; by IKKB mark. Phosphoserine occurs at positions 213 and 216.

The protein belongs to the acetyltransferase family. ARD1 subfamily. In terms of assembly, component of the N-terminal acetyltransferase A complex (also called the NatA complex) composed of NAA10 and NAA15. Within the complex interacts with NAA15. Component of the N-terminal acetyltransferase A (NatA)/HYPK complex at least composed of NAA10, NAA15 and HYPK, which has N-terminal acetyltransferase activity. In complex with NAA15, interacts with HYPK. Component of the N-terminal acetyltransferase E (NatE) complex at least composed of NAA10, NAA15 and NAA50. Within the complex interacts with NAA15; the interaction is required for binding to NAAT50. Interacts with NAAT50. The interaction of the NatA complex with NAA50 reduces the acetylation activity of the NatA complex. Component of the N-terminal acetyltransferase E (NatE)/HYPK complex at least composed of NAA10, NAA15, NAA50 and HYPK. In complex with NAA15, interacts with HYPK; the interaction with HYPK reduces the capacity of the NatA complex to interact with NAA50. Interacts with HIF1A (via its ODD domain); the interaction increases HIF1A protein stability during normoxia, an down-regulates it when induced by hypoxia. Interacts with the ribosome. Binds to MYLK. Interacts with NAA16. Interacts (via its C-terminal domain) with TSC2, leading to its acetylation. Interacts with IKBKB. Interacts with HSPA1A and HSPA1B leading to its acetylation. Post-translationally, cleaved by caspases during apoptosis. Phosphorylation by IKBKB/IKKB at Ser-209 promotes its proteasome-mediated degradation. In terms of processing, autoacetylated at Lys-136 which stimulates its catalytic activity. In terms of tissue distribution, ubiquitous.

The protein resides in the cytoplasm. Its subcellular location is the nucleus. The catalysed reaction is N-terminal glycyl-[protein] + acetyl-CoA = N-terminal N(alpha)-acetylglycyl-[protein] + CoA + H(+). The enzyme catalyses N-terminal L-alanyl-[protein] + acetyl-CoA = N-terminal N(alpha)-acetyl-L-alanyl-[protein] + CoA + H(+). It catalyses the reaction N-terminal L-seryl-[protein] + acetyl-CoA = N-terminal N(alpha)-acetyl-L-seryl-[protein] + CoA + H(+). It carries out the reaction N-terminal L-valyl-[protein] + acetyl-CoA = N-terminal N(alpha)-acetyl-L-valyl-[protein] + CoA + H(+). The catalysed reaction is N-terminal L-cysteinyl-[protein] + acetyl-CoA = N-terminal N(alpha)-acetyl-L-cysteinyl-[protein] + CoA + H(+). The enzyme catalyses N-terminal L-threonyl-[protein] + acetyl-CoA = N-terminal N(alpha)-acetyl-L-threonyl-[protein] + CoA + H(+). In terms of biological role, catalytic subunit of N-terminal acetyltransferase complexes which display alpha (N-terminal) acetyltransferase activity. Acetylates amino termini that are devoid of initiator methionine. The alpha (N-terminal) acetyltransferase activity may be important for vascular, hematopoietic and neuronal growth and development. Without NAA15, displays epsilon (internal) acetyltransferase activity towards HIF1A, thereby promoting its degradation. Represses MYLK kinase activity by acetylation, and thus represses tumor cell migration. Acetylates, and stabilizes TSC2, thereby repressing mTOR activity and suppressing cancer development. Acetylates HSPA1A and HSPA1B at 'Lys-77' which enhances its chaperone activity and leads to preferential binding to co-chaperone HOPX. Acetylates HIST1H4A. Acts as a negative regulator of sister chromatid cohesion during mitosis. This is N-alpha-acetyltransferase 10 (NAA10) from Homo sapiens (Human).